A 798-amino-acid chain; its full sequence is Neuroligin-1 (798 aa).

The first 17 residues, 1–17 (MERIYLLLLLFLPRIRS), serve as a signal peptide directing secretion. The Extracellular segment spans residues 18-685 (YDVRSVTTSW…AAGSFTGKAL (668 aa)). Cys-86 and Cys-125 are oxidised to a cystine. 3 N-linked (GlcNAc...) asparagine glycosylation sites follow: Asn-164, Asn-292, and Asn-315. A disulfide bridge links Cys-288 with Cys-307. The tract at residues 636-676 (ANLPFPPPPMPPSPPPELTTKPKPSESPTTLQTTTESEKAA) is disordered. Positions 639–652 (PFPPPPMPPSPPPE) are enriched in pro residues. A compositionally biased stretch (low complexity) spans 653–665 (LTTKPKPSESPTT). Residues 686–706 (GGVIFIGCGFLIMNVCLLIAV) traverse the membrane as a helical segment. Residues 707–798 (RREWGKKRRN…QAPTLEEIQV (92 aa)) are Cytoplasmic-facing. Residues 731 to 765 (HGGGAEQYNSLNSPEPLLSASHKNSTSMRPAGISP) are disordered.

The protein belongs to the type-B carboxylesterase/lipase family. As to quaternary structure, interacts (via extracellular domain) with isoform b of madd-4; the interaction is required for the localization to postsynaptic domains. Interacts with unc-49.

The protein resides in the cell membrane. It localises to the synapse. In terms of biological role, probable neuronal cell surface protein thought to be involved in cell-cell-interactions by forming intercellular junctions through binding to beta-neurexins. Plays a role in the clustering of the GABA(A) receptor unc-49 at postsynaptic sites in neuromuscular junctions (NMJs) via the interaction with madd-4 and neurexin nrx-1 and is thereby required for normal GABAergic synaptic transmission. This Caenorhabditis elegans protein is Neuroligin-1 (nlg-1).